A 949-amino-acid chain; its full sequence is Glycine dehydrogenase (decarboxylating) (949 aa).

The residue at position 704 (K704) is an N6-(pyridoxal phosphate)lysine.

Belongs to the GcvP family. In terms of assembly, the glycine cleavage system is composed of four proteins: P, T, L and H. It depends on pyridoxal 5'-phosphate as a cofactor.

The enzyme catalyses N(6)-[(R)-lipoyl]-L-lysyl-[glycine-cleavage complex H protein] + glycine + H(+) = N(6)-[(R)-S(8)-aminomethyldihydrolipoyl]-L-lysyl-[glycine-cleavage complex H protein] + CO2. Functionally, the glycine cleavage system catalyzes the degradation of glycine. The P protein binds the alpha-amino group of glycine through its pyridoxal phosphate cofactor; CO(2) is released and the remaining methylamine moiety is then transferred to the lipoamide cofactor of the H protein. This is Glycine dehydrogenase (decarboxylating) from Bacteroides fragilis (strain YCH46).